Consider the following 371-residue polypeptide: Glutamate 5-kinase (371 aa).

ATP is bound at residue Lys-11. Substrate contacts are provided by Ser-52, Asp-139, and Asn-151. ATP-binding positions include 171–172 (TD) and 213–219 (TGGMATK). The region spanning 278–356 (EGSLTLDEGA…AEIPYILGYE (79 aa)) is the PUA domain.

Belongs to the glutamate 5-kinase family.

The protein resides in the cytoplasm. It carries out the reaction L-glutamate + ATP = L-glutamyl 5-phosphate + ADP. Its pathway is amino-acid biosynthesis; L-proline biosynthesis; L-glutamate 5-semialdehyde from L-glutamate: step 1/2. Functionally, catalyzes the transfer of a phosphate group to glutamate to form L-glutamate 5-phosphate. This Synechococcus sp. (strain JA-3-3Ab) (Cyanobacteria bacterium Yellowstone A-Prime) protein is Glutamate 5-kinase.